A 621-amino-acid chain; its full sequence is 1-deoxy-D-xylulose-5-phosphate synthase (621 aa).

Thiamine diphosphate is bound by residues H80 and 121-123 (GHS). A Mg(2+)-binding site is contributed by D152. Thiamine diphosphate-binding positions include 153-154 (GA), N181, Y288, and E370. N181 serves as a coordination point for Mg(2+).

Belongs to the transketolase family. DXPS subfamily. Homodimer. Mg(2+) serves as cofactor. Requires thiamine diphosphate as cofactor.

The enzyme catalyses D-glyceraldehyde 3-phosphate + pyruvate + H(+) = 1-deoxy-D-xylulose 5-phosphate + CO2. It participates in metabolic intermediate biosynthesis; 1-deoxy-D-xylulose 5-phosphate biosynthesis; 1-deoxy-D-xylulose 5-phosphate from D-glyceraldehyde 3-phosphate and pyruvate: step 1/1. In terms of biological role, catalyzes the acyloin condensation reaction between C atoms 2 and 3 of pyruvate and glyceraldehyde 3-phosphate to yield 1-deoxy-D-xylulose-5-phosphate (DXP). In Shewanella sediminis (strain HAW-EB3), this protein is 1-deoxy-D-xylulose-5-phosphate synthase.